A 60-amino-acid chain; its full sequence is MDHRLLEIIACPVCNGKLYYSQDKQELICKLDSLAFPLRDGIPVLLETEARALTVEESHS.

Belongs to the UPF0434 family.

The sequence is that of UPF0434 protein KPK_3615 from Klebsiella pneumoniae (strain 342).